We begin with the raw amino-acid sequence, 361 residues long: Caveolae-associated protein 4 (361 aa).

The tract at residues 1-21 (MEHNGSASNADKIHQNRLSNV) is disordered. The stretch at 100 to 124 (IKDVKARVEKQQTHVKKVEAKQEEI) forms a coiled coil. Phosphoserine occurs at positions 152, 171, and 172. The stretch at 204-248 (ENMQKTRQNFDKKVNRIRTRIVTPERRERLRQSGERLRQSGERLK) forms a coiled coil. Residues 230–255 (RERLRQSGERLRQSGERLKQSGERFK) show a composition bias toward basic and acidic residues. 2 disordered regions span residues 230–283 (RERL…AVAE) and 310–346 (PEAL…FKPQ). A Phosphothreonine modification is found at T335. S354 carries the phosphoserine modification.

The protein belongs to the CAVIN family. As to quaternary structure, component of the CAVIN complex composed of CAVIN1, CAVIN2, CAVIN3 and CAVIN4. Interacts with CAVIN1, ADRA1A, ADRA1B, MAPK1 and MAPK3. Interacts with CAVIN2; this augments the transactivation of NPPA.

It localises to the cytoplasm. The protein resides in the myofibril. It is found in the sarcomere. The protein localises to the cytosol. Its subcellular location is the cell membrane. It localises to the sarcolemma. The protein resides in the membrane. It is found in the caveola. In terms of biological role, modulates the morphology of formed caveolae in cardiomyocytes, but is not required for caveolar formation. Facilitates the recruitment of MAPK1/3 to caveolae within cardiomyocytes and regulates alpha-1 adrenergic receptor-induced hypertrophic responses in cardiomyocytes through MAPK1/3 activation. Contributes to proper membrane localization and stabilization of caveolin-3 (CAV3) in cardiomyocytes. Induces RHOA activation and activates NPPA transcription and myofibrillar organization through the Rho/ROCK signaling pathway. This is Caveolae-associated protein 4 (CAVIN4) from Bos taurus (Bovine).